Consider the following 265-residue polypeptide: Histone H1 (265 aa).

Low complexity predominate over residues 1-27 (MATEEPIVAVETVPEPIVTEPTTITEP). Disordered stretches follow at residues 1–66 (MATE…PTYE), 131–226 (AAKK…TTPG), and 242–265 (VKSV…GGRK). Positions 29-42 (VPEKEEPKAEVEKT) are enriched in basic and acidic residues. Positions 43 to 55 (KKAKGSKPKKASK) are enriched in basic residues. The H15 domain maps to 61 to 130 (SHPTYEEMIK…KVKGSFKLSA (70 aa)). The segment covering 140–171 (PKAKTAAKAKSVKAKPAAKPKAKAVVKPKVAS) has biased composition (basic residues). Residues 186-202 (KPKTVAAKTKPTAAKPK) are compositionally biased toward low complexity. The span at 203–215 (AVVKPKSKVKPAK) shows a compositional bias: basic residues. The segment covering 216-226 (VAKTSVKTTPG) has biased composition (low complexity).

Belongs to the histone H1/H5 family.

The protein localises to the nucleus. It is found in the chromosome. Its function is as follows. Histones H1 are necessary for the condensation of nucleosome chains into higher-order structures. The sequence is that of Histone H1 from Pisum sativum (Garden pea).